A 618-amino-acid chain; its full sequence is Putative ATP-dependent DNA helicase Q1 (618 aa).

In terms of domain architecture, Helicase ATP-binding spans 95-270 (INAVMSKEDA…KKMLGIPVAI (176 aa)). 108–115 (LSTGGGKS) serves as a coordination point for ATP. Positions 214–217 (DEVH) match the DEVH box motif. Residues 295–443 (CVEKIVRTIK…NLYNMVRYAS (149 aa)) enclose the Helicase C-terminal domain. Zn(2+) is bound by residues cysteine 448, cysteine 466, cysteine 470, and cysteine 473. The segment at 586 to 618 (KGRAEENNRKRKAAVTSSDEEVDVGDDDDVITL) is disordered. Positions 603–618 (SDEEVDVGDDDDVITL) are enriched in acidic residues.

The protein belongs to the helicase family. RecQ subfamily. Zn(2+) serves as cofactor.

It localises to the nucleus. It carries out the reaction Couples ATP hydrolysis with the unwinding of duplex DNA by translocating in the 3'-5' direction.. The catalysed reaction is ATP + H2O = ADP + phosphate + H(+). Functionally, DNA helicase that may play a role in the repair of DNA that is damaged by ultraviolet light or other mutagens. Exhibits a magnesium-dependent ATP-dependent DNA-helicase activity that unwinds single- and double-stranded DNA in a 3'-5' direction. The chain is Putative ATP-dependent DNA helicase Q1 from Caenorhabditis briggsae.